Reading from the N-terminus, the 255-residue chain is AA9 family lytic polysaccharide monooxygenase D (255 aa).

An N-terminal signal peptide occupies residues 1–19; it reads MYRTLGSIALLAGGAAAHG. 2 residues coordinate Cu(2+): His-18 and His-92. Disulfide bonds link Cys-65–Cys-189 and Cys-104–Cys-111. N-linked (GlcNAc...) asparagine glycosylation is present at Asn-152. 2 residues coordinate O2: His-178 and Gln-184. Tyr-186 contacts Cu(2+). N-linked (GlcNAc...) asparagine glycosylation is present at Asn-220.

Belongs to the polysaccharide monooxygenase AA9 family. It depends on Cu(2+) as a cofactor.

The protein resides in the secreted. The enzyme catalyses [(1-&gt;4)-beta-D-glucosyl]n+m + reduced acceptor + O2 = 4-dehydro-beta-D-glucosyl-[(1-&gt;4)-beta-D-glucosyl]n-1 + [(1-&gt;4)-beta-D-glucosyl]m + acceptor + H2O.. Functionally, lytic polysaccharide monooxygenase (LPMO) that depolymerizes crystalline and amorphous polysaccharides via the oxidation of scissile alpha- or beta-(1-4)-glycosidic bonds, yielding specifically C1 oxidation product. Catalysis by LPMOs requires the reduction of the active-site copper from Cu(II) to Cu(I) by a reducing agent and H(2)O(2) or O(2) as a cosubstrate. Is active on regenerated amorphous cellulose (RAC) in the presence of ascorbic acid or 3-methylcatechol. Also acts on phosphoric acid swollen cellulose (PASC) as a substrate. In Thermothelomyces thermophilus (strain ATCC 42464 / BCRC 31852 / DSM 1799) (Sporotrichum thermophile), this protein is AA9 family lytic polysaccharide monooxygenase D.